Consider the following 205-residue polypeptide: Large ribosomal subunit protein uL4 (205 aa).

Positions 45-97 are disordered; it reads RQGTSAVKNRSAVRGGGKKPWRQKGTGRARQGSIRAPQWRGGGTVFGPTPRSY. Residues 60–71 show a composition bias toward basic residues; sequence GGKKPWRQKGTG.

This sequence belongs to the universal ribosomal protein uL4 family. Part of the 50S ribosomal subunit.

In terms of biological role, one of the primary rRNA binding proteins, this protein initially binds near the 5'-end of the 23S rRNA. It is important during the early stages of 50S assembly. It makes multiple contacts with different domains of the 23S rRNA in the assembled 50S subunit and ribosome. Functionally, forms part of the polypeptide exit tunnel. This is Large ribosomal subunit protein uL4 from Lactobacillus johnsonii (strain CNCM I-12250 / La1 / NCC 533).